The sequence spans 274 residues: Large ribosomal subunit protein uL2 (274 aa).

The tract at residues 223 to 274 is disordered; sequence VAMNPVDHPHGGGEGRTSGGRHPVTPWGVPTKGYKTRSNKRTDKYIVRRRNK.

Belongs to the universal ribosomal protein uL2 family. In terms of assembly, part of the 50S ribosomal subunit. Forms a bridge to the 30S subunit in the 70S ribosome.

Functionally, one of the primary rRNA binding proteins. Required for association of the 30S and 50S subunits to form the 70S ribosome, for tRNA binding and peptide bond formation. It has been suggested to have peptidyltransferase activity; this is somewhat controversial. Makes several contacts with the 16S rRNA in the 70S ribosome. The sequence is that of Large ribosomal subunit protein uL2 from Shewanella baltica (strain OS223).